Here is a 129-residue protein sequence, read N- to C-terminus: Phosphomevalonate dehydratase small subunit (129 aa).

Ser61 serves as the catalytic Proton acceptor.

This sequence belongs to the AcnX type II small subunit family. As to quaternary structure, heterodimer composed of a large subunit (PMDh-L) and a small subunit (PMDh-S).

It carries out the reaction (R)-5-phosphomevalonate = (2E)-3-methyl-5-phosphooxypent-2-enoate + H2O. Its pathway is isoprenoid biosynthesis; isopentenyl diphosphate biosynthesis via mevalonate pathway. Functionally, component of a hydro-lyase that catalyzes the dehydration of mevalonate 5-phosphate (MVA5P) to form trans-anhydromevalonate 5-phosphate (tAHMP). Involved in the archaeal mevalonate (MVA) pathway, which provides fundamental precursors for isoprenoid biosynthesis, such as isopentenyl diphosphate (IPP) and dimethylallyl diphosphate (DMAPP). This Methanocaldococcus jannaschii (strain ATCC 43067 / DSM 2661 / JAL-1 / JCM 10045 / NBRC 100440) (Methanococcus jannaschii) protein is Phosphomevalonate dehydratase small subunit.